The following is a 234-amino-acid chain: MQTPLESTDVKLDTLNEPSAHLIEKNVALPKDIFRSYLSYWIYEIARYTPVMILSLVIGVLVLLIIFFNDNEACVFNSAYYAYLSLVVLLIILGDGNPKLVSRRNFRTELLVDVITRKPAVEGKEWRIITYNMNQYLFNHGQWHTPYYFYSDEDCYRYFLRLVEGVTPKKQTATSIGNSPVTAKPEDAIESASPSSRLNYRNFLLKAAEIERQAQENYWRRRHPNIDALLKKTE.

Residues 1 to 47 (MQTPLESTDVKLDTLNEPSAHLIEKNVALPKDIFRSYLSYWIYEIAR) are Cytoplasmic-facing. Threonine 3 is modified (phosphothreonine). A helical membrane pass occupies residues 48-68 (YTPVMILSLVIGVLVLLIIFF). At 69-72 (NDNE) the chain is on the extracellular side. A helical transmembrane segment spans residues 73-93 (ACVFNSAYYAYLSLVVLLIIL). The Cytoplasmic segment spans residues 94–234 (GDGNPKLVSR…NIDALLKKTE (141 aa)). Residues 231–234 (KKTE) are COPI binding.

It belongs to the DUP/COS family. In terms of assembly, interacts with MST28. Binds to coatomer proteins of COPI and SEC23/SEC24 of COPII coated vesicles.

The protein localises to the endoplasmic reticulum. The protein resides in the golgi apparatus. It is found in the cytoplasmic vesicle. It localises to the COPI-coated vesicle membrane. Its subcellular location is the COPII-coated vesicle membrane. Involved in protein trafficking vesicle formation, probably by stabilizing of coatomer at the Golgi membrane and thus allowing the efficient formation of COPI coated vesicles. This is Multicopy suppressor of SEC21 protein 27 (MST27) from Saccharomyces cerevisiae (strain ATCC 204508 / S288c) (Baker's yeast).